Here is a 565-residue protein sequence, read N- to C-terminus: Alkaline nuclease (565 aa).

It belongs to the herpesviridae alkaline nuclease family. As to quaternary structure, interacts with major DNA-binding protein; this interaction increases the nuclease processivity of the alkaline exonuclease.

The protein resides in the host nucleus. It is found in the host cytoplasm. Its function is as follows. Plays a role in processing non linear or branched viral DNA intermediates in order to promote the production of mature packaged unit-length linear progeny viral DNA molecules. Exhibits endonuclease and exonuclease activities and accepts both double-stranded and single-stranded DNA as substrate. Exonuclease digestion of DNA is in the 5'-&gt; 3' direction and the products are 5'-monophosphate nucleosides. Additionally, forms a recombinase with the major DNA-binding protein, which displays strand exchange activity. In Equine herpesvirus 1 (strain V592) (EHV-1), this protein is Alkaline nuclease.